We begin with the raw amino-acid sequence, 38 residues long: Large ribosomal subunit protein bL36 (38 aa).

The protein belongs to the bacterial ribosomal protein bL36 family.

The polypeptide is Large ribosomal subunit protein bL36 (Aster yellows witches'-broom phytoplasma (strain AYWB)).